The sequence spans 240 residues: tRNA (guanine-N(1)-)-methyltransferase (240 aa).

S-adenosyl-L-methionine-binding positions include Gly110 and 130 to 135 (VGDYVL).

The protein belongs to the RNA methyltransferase TrmD family. In terms of assembly, homodimer.

Its subcellular location is the cytoplasm. It carries out the reaction guanosine(37) in tRNA + S-adenosyl-L-methionine = N(1)-methylguanosine(37) in tRNA + S-adenosyl-L-homocysteine + H(+). In terms of biological role, specifically methylates guanosine-37 in various tRNAs. In Borrelia recurrentis (strain A1), this protein is tRNA (guanine-N(1)-)-methyltransferase.